A 309-amino-acid chain; its full sequence is Transcription initiation factor IIB 1 (309 aa).

A run of 2 repeats spans residues 125-208 (NELE…LREL) and 219-300 (DYVT…ELTQ).

Belongs to the TFIIB family.

Stabilizes TBP binding to an archaeal box-A promoter. Also responsible for recruiting RNA polymerase II to the pre-initiation complex (DNA-TBP-TFIIB). This chain is Transcription initiation factor IIB 1, found in Saccharolobus solfataricus (strain ATCC 35092 / DSM 1617 / JCM 11322 / P2) (Sulfolobus solfataricus).